The following is a 162-amino-acid chain: NADH-quinone oxidoreductase subunit I (162 aa).

2 consecutive 4Fe-4S ferredoxin-type domains span residues 52 to 82 (LRRY…IEAG) and 93 to 122 (VRYD…EGPN). The [4Fe-4S] cluster site is built by Cys62, Cys65, Cys68, Cys72, Cys102, Cys105, Cys108, and Cys112.

The protein belongs to the complex I 23 kDa subunit family. As to quaternary structure, NDH-1 is composed of 14 different subunits. Subunits NuoA, H, J, K, L, M, N constitute the membrane sector of the complex. Requires [4Fe-4S] cluster as cofactor.

Its subcellular location is the cell inner membrane. The enzyme catalyses a quinone + NADH + 5 H(+)(in) = a quinol + NAD(+) + 4 H(+)(out). Its function is as follows. NDH-1 shuttles electrons from NADH, via FMN and iron-sulfur (Fe-S) centers, to quinones in the respiratory chain. The immediate electron acceptor for the enzyme in this species is believed to be ubiquinone. Couples the redox reaction to proton translocation (for every two electrons transferred, four hydrogen ions are translocated across the cytoplasmic membrane), and thus conserves the redox energy in a proton gradient. The polypeptide is NADH-quinone oxidoreductase subunit I (Bradyrhizobium sp. (strain BTAi1 / ATCC BAA-1182)).